The following is a 317-amino-acid chain: tRNA pseudouridine synthase B (317 aa).

Asp-47 serves as the catalytic Nucleophile.

Belongs to the pseudouridine synthase TruB family. Type 1 subfamily.

It carries out the reaction uridine(55) in tRNA = pseudouridine(55) in tRNA. Its function is as follows. Responsible for synthesis of pseudouridine from uracil-55 in the psi GC loop of transfer RNAs. This is tRNA pseudouridine synthase B from Vibrio atlanticus (strain LGP32) (Vibrio splendidus (strain Mel32)).